Here is a 455-residue protein sequence, read N- to C-terminus: Phosphoglycerate kinase, glycosomal (455 aa).

12 residues coordinate (2R)-3-phosphoglycerate: valine 23, aspartate 24, phenylalanine 25, asparagine 26, arginine 39, serine 61, histidine 62, glycine 64, arginine 65, arginine 132, histidine 168, and arginine 169. Positions 214 and 215 each coordinate ADP. Glycine 214 contributes to the CDP binding site. AMP-binding residues include alanine 215 and lysine 216. Alanine 215 contributes to the ATP binding site. Alanine 215 is a Mg(2+) binding site. Lysine 216 lines the (2R)-3-phosphoglycerate pocket. Position 219 (aspartate 219) interacts with CDP. Aspartate 219 contacts Mg(2+). Positions 220 and 238 each coordinate ADP. Lysine 220 lines the AMP pocket. ATP is bound at residue lysine 220. A CDP-binding site is contributed by glycine 238. AMP contacts are provided by alanine 239 and alanine 311. ATP is bound by residues alanine 239 and alanine 311. ADP-binding residues include alanine 311 and asparagine 335. CDP is bound by residues glycine 336 and phenylalanine 341. ADP-binding residues include phenylalanine 341, glutamate 342, aspartate 374, and threonine 375. AMP is bound at residue glutamate 342. Residues glutamate 342, aspartate 374, and threonine 375 each contribute to the ATP site. Aspartate 374 serves as a coordination point for Mg(2+). Residues 417 to 455 form a topogenic signal region; the sequence is DAKAPAAAAAAGGDCPCGSGCAAVPAAATATVSMVLASP.

It belongs to the phosphoglycerate kinase family. In terms of assembly, monomer. Mg(2+) is required as a cofactor.

Its subcellular location is the glycosome. It catalyses the reaction (2R)-3-phosphoglycerate + ATP = (2R)-3-phospho-glyceroyl phosphate + ADP. Its pathway is carbohydrate degradation; glycolysis; pyruvate from D-glyceraldehyde 3-phosphate: step 2/5. The protein is Phosphoglycerate kinase, glycosomal (PGKC) of Crithidia fasciculata.